Consider the following 144-residue polypeptide: Protein archease (144 aa).

Aspartate 14, aspartate 143, and isoleucine 144 together coordinate Ca(2+).

Belongs to the archease family.

Activates the tRNA-splicing ligase complex by facilitating the enzymatic turnover of catalytic subunit RtcB. Acts by promoting the guanylylation of RtcB, a key intermediate step in tRNA ligation. Can also alter the NTP specificity of RtcB such that ATP, dGTP or ITP is used efficiently. This is Protein archease from Aeropyrum pernix (strain ATCC 700893 / DSM 11879 / JCM 9820 / NBRC 100138 / K1).